Here is an 84-residue protein sequence, read N- to C-terminus: uncharacterized protein (84 aa).

2 helical membrane passes run 7–27 and 52–72; these read HVNF…ILCI and ITII…INPC.

It is found in the membrane. This is an uncharacterized protein from Saccharomyces cerevisiae (strain ATCC 204508 / S288c) (Baker's yeast).